We begin with the raw amino-acid sequence, 317 residues long: NAD-dependent protein deacetylase Sirt6 (317 aa).

The region spanning 27–273 is the Deacetylase sirtuin-type domain; it reads DEVVAEKCQE…SKVCKLLGVE (247 aa). Ala-53, Thr-57, Phe-64, Arg-65, Trp-71, Gln-113, and His-133 together coordinate NAD(+). The active-site Proton acceptor is His-133. Residues Cys-141, Cys-144, Cys-166, and Cys-177 each contribute to the Zn(2+) site. The NAD(+) site is built by Gly-215, Asn-241, Gln-243, and Val-259.

The protein belongs to the sirtuin family. Class IV subfamily. The cofactor is Zn(2+). As to expression, widely expressed.

It localises to the nucleus. It is found in the chromosome. It catalyses the reaction N(6)-acetyl-L-lysyl-[protein] + NAD(+) + H2O = 2''-O-acetyl-ADP-D-ribose + nicotinamide + L-lysyl-[protein]. Functionally, NAD-dependent histone deacylase that acts as a regulator of life span. The protein is NAD-dependent protein deacetylase Sirt6 of Drosophila melanogaster (Fruit fly).